A 219-amino-acid chain; its full sequence is Uracil-DNA glycosylase (219 aa).

Catalysis depends on D61, which acts as the Proton acceptor.

This sequence belongs to the uracil-DNA glycosylase (UDG) superfamily. UNG family.

The protein localises to the cytoplasm. It carries out the reaction Hydrolyzes single-stranded DNA or mismatched double-stranded DNA and polynucleotides, releasing free uracil.. In terms of biological role, excises uracil residues from the DNA which can arise as a result of misincorporation of dUMP residues by DNA polymerase or due to deamination of cytosine. In Haemophilus influenzae (strain 86-028NP), this protein is Uracil-DNA glycosylase.